The sequence spans 79 residues: uncharacterized protein (79 aa).

The disordered stretch occupies residues 1-37 (MQLDVFSRMMFGDAAKPTEEKEEEQQEEVSQVSQTND).

This is an uncharacterized protein from Bacillus subtilis (strain 168).